Here is a 501-residue protein sequence, read N- to C-terminus: ATP synthase subunit beta (501 aa).

Residue 153 to 160 (GGAGVGKT) participates in ATP binding.

This sequence belongs to the ATPase alpha/beta chains family. As to quaternary structure, F-type ATPases have 2 components, CF(1) - the catalytic core - and CF(0) - the membrane proton channel. CF(1) has five subunits: alpha(3), beta(3), gamma(1), delta(1), epsilon(1). CF(0) has three main subunits: a(1), b(2) and c(9-12). The alpha and beta chains form an alternating ring which encloses part of the gamma chain. CF(1) is attached to CF(0) by a central stalk formed by the gamma and epsilon chains, while a peripheral stalk is formed by the delta and b chains.

It is found in the cell inner membrane. It carries out the reaction ATP + H2O + 4 H(+)(in) = ADP + phosphate + 5 H(+)(out). Its function is as follows. Produces ATP from ADP in the presence of a proton gradient across the membrane. The catalytic sites are hosted primarily by the beta subunits. This is ATP synthase subunit beta from Cytophaga hutchinsonii (strain ATCC 33406 / DSM 1761 / CIP 103989 / NBRC 15051 / NCIMB 9469 / D465).